Here is a 512-residue protein sequence, read N- to C-terminus: Sugar transport protein MST7 (512 aa).

At 1 to 17 (MENAGAGDGAPKHYPGK) the chain is on the cytoplasmic side. A helical transmembrane segment spans residues 18–38 (MTVFVFIACLVASSGGLIFGY). The Extracellular segment spans residues 39–81 (DIGISGGVTSMDPFLSRFFPSVYAKEKEVVDTNQYCKFDSEPL). Residues 82–102 (TLFTSSLYLAALIASLFASVI) traverse the membrane as a helical segment. Topologically, residues 103 to 116 (TRKLGRKMTMLGGG) are cytoplasmic. A helical transmembrane segment spans residues 117–137 (FIFLIGAVLNGAAVNVAMLII). Residues 138 to 139 (GR) are Extracellular-facing. A helical transmembrane segment spans residues 140 to 160 (ILLGIGVGFSIQAVPLYLSEM). At 161–166 (APAKMR) the chain is on the cytoplasmic side. Residues 167–187 (GMLNIIFQLMITVGILFANLI) form a helical membrane-spanning segment. Residues 188–201 (NYFTDKIAGGWGWR) are Extracellular-facing. Residues 202–222 (VSLGLAAVPAVIMTVGSILLP) traverse the membrane as a helical segment. The Cytoplasmic portion of the chain corresponds to 223–294 (DTPNSLLSRG…MSVLIPTLQQ (72 aa)). Residues 295 to 315 (LTGINVVMFYAPVLFKTIGFG) form a helical membrane-spanning segment. Residues 316 to 320 (GTASL) lie on the Extracellular side of the membrane. The helical transmembrane segment at 321–341 (MSAVITGLVNMFATFVSIATV) threads the bilayer. Topologically, residues 342 to 347 (DRFGRR) are cytoplasmic. A helical transmembrane segment spans residues 348–368 (VLFIQGGIQMIIAQFILGTLI). At 369–385 (AVKFGTAGVANISQGYA) the chain is on the extracellular side. Residues 386–406 (IVVVLFICLFVSAFAWSWGPL) traverse the membrane as a helical segment. Residues 407 to 425 (GWLVPSEIFPLEIRSAAQS) are Cytoplasmic-facing. The chain crosses the membrane as a helical span at residues 426–446 (VVVVFNMAFTFFIAQIFLMML). Residues 447–450 (CRLK) lie on the Extracellular side of the membrane. A helical transmembrane segment spans residues 451 to 471 (FGLFFFFGAMELIMTGFVLVF). Over 472–512 (LPETKGIPIEEMDRIWGEHWYWSRFVGAGRNRVMQMASTNV) the chain is Cytoplasmic.

It belongs to the major facilitator superfamily. Sugar transporter (TC 2.A.1.1) family.

Its subcellular location is the membrane. Functionally, mediates active uptake of hexoses by sugar:proton symport. This Oryza sativa subsp. japonica (Rice) protein is Sugar transport protein MST7.